A 714-amino-acid chain; its full sequence is Inducible lysine decarboxylase (714 aa).

Lysine 367 bears the N6-(pyridoxal phosphate)lysine mark.

Belongs to the Orn/Lys/Arg decarboxylase class-I family. Homodecamer. Interacts with RavA. Requires pyridoxal 5'-phosphate as cofactor.

It is found in the cytoplasm. The catalysed reaction is L-lysine + H(+) = cadaverine + CO2. This is Inducible lysine decarboxylase (cadA) from Salmonella typhi.